The sequence spans 1022 residues: Probable E3 ubiquitin-protein ligase HERC6 (1022 aa).

RCC1 repeat units follow at residues 41-92, 93-145, 147-198, 200-253, and 254-304; these read NHRV…AVCH, KGRV…ALSK, SQVF…ALSL, GTSF…VLTQ, and DGKV…AYVH. Positions 693–1017 constitute an HECT domain; that stretch reads EATDFCKVLV…INNNRGFVSP (325 aa). Residue C985 is the Glycyl thioester intermediate of the active site.

Detected in brain, heart, placenta and testis.

The protein localises to the cytoplasm. Its subcellular location is the cytosol. The enzyme catalyses S-ubiquitinyl-[E2 ubiquitin-conjugating enzyme]-L-cysteine + [acceptor protein]-L-lysine = [E2 ubiquitin-conjugating enzyme]-L-cysteine + N(6)-ubiquitinyl-[acceptor protein]-L-lysine.. Its pathway is protein modification; protein ubiquitination. In terms of biological role, E3 ubiquitin-protein ligase which accepts ubiquitin from an E2 ubiquitin-conjugating enzyme in the form of a thioester and then directly transfers the ubiquitin to targeted substrates. The protein is Probable E3 ubiquitin-protein ligase HERC6 (HERC6) of Homo sapiens (Human).